The chain runs to 155 residues: SsrA-binding protein (155 aa).

Residues 136 to 155 (RESLKRRQDQRDMQRAMKNY) form a disordered region.

It belongs to the SmpB family.

It localises to the cytoplasm. Functionally, required for rescue of stalled ribosomes mediated by trans-translation. Binds to transfer-messenger RNA (tmRNA), required for stable association of tmRNA with ribosomes. tmRNA and SmpB together mimic tRNA shape, replacing the anticodon stem-loop with SmpB. tmRNA is encoded by the ssrA gene; the 2 termini fold to resemble tRNA(Ala) and it encodes a 'tag peptide', a short internal open reading frame. During trans-translation Ala-aminoacylated tmRNA acts like a tRNA, entering the A-site of stalled ribosomes, displacing the stalled mRNA. The ribosome then switches to translate the ORF on the tmRNA; the nascent peptide is terminated with the 'tag peptide' encoded by the tmRNA and targeted for degradation. The ribosome is freed to recommence translation, which seems to be the essential function of trans-translation. This is SsrA-binding protein from Nostoc sp. (strain PCC 7120 / SAG 25.82 / UTEX 2576).